The sequence spans 155 residues: Microsomal glutathione S-transferase 1 (155 aa).

Residues 3–9 (DLTELMK) lie on the Lumenal side of the membrane. Residues 10–33 (NEVFMAFASYATIVLSKMMFMSTA) form a helical membrane-spanning segment. Topologically, residues 34 to 62 (TAFYRLTRKVFANPEDCSSFGKGENAKKY) are cytoplasmic. Arg38 contributes to the glutathione binding site. N6-acetyllysine occurs at positions 42, 55, and 60. A helical membrane pass occupies residues 63–96 (LRTDERVERVRRAHLNDLENIVPFLGIGLLYSLS). Residues Arg73, Arg74, His76, and Glu81 each contribute to the glutathione site. Residues 97–99 (GPD) lie on the Lumenal side of the membrane. Residues 100 to 123 (LSTAILHFRLFVGARIYHTIAYLT) traverse the membrane as a helical segment. Residue Tyr121 participates in glutathione binding. Over 124-128 (PLPQP) the chain is Cytoplasmic. Residues 129-148 (NRGLAFFLGYGVTLSMAYRL) traverse the membrane as a helical segment. Topologically, residues 149 to 155 (LKSRLYL) are lumenal.

Belongs to the MAPEG family. Homotrimer; The trimer binds only one molecule of glutathione.

Its subcellular location is the endoplasmic reticulum membrane. It localises to the mitochondrion outer membrane. The enzyme catalyses RX + glutathione = an S-substituted glutathione + a halide anion + H(+). Conjugation of reduced glutathione to a wide number of exogenous and endogenous hydrophobic electrophiles. The sequence is that of Microsomal glutathione S-transferase 1 (MGST1) from Sus scrofa (Pig).